A 330-amino-acid chain; its full sequence is Phosphate acyltransferase (330 aa).

The protein belongs to the PlsX family. In terms of assembly, homodimer. Probably interacts with PlsY.

It is found in the cytoplasm. The catalysed reaction is a fatty acyl-[ACP] + phosphate = an acyl phosphate + holo-[ACP]. Its pathway is lipid metabolism; phospholipid metabolism. Its function is as follows. Catalyzes the reversible formation of acyl-phosphate (acyl-PO(4)) from acyl-[acyl-carrier-protein] (acyl-ACP). This enzyme utilizes acyl-ACP as fatty acyl donor, but not acyl-CoA. The sequence is that of Phosphate acyltransferase from Streptococcus agalactiae serotype III (strain NEM316).